A 367-amino-acid polypeptide reads, in one-letter code: Aspartate-semialdehyde dehydrogenase (367 aa).

Residues 10–13 (RGMV), 37–38 (TS), and glutamine 73 each bind NADP(+). Arginine 102 lines the phosphate pocket. Cysteine 135 functions as the Acyl-thioester intermediate in the catalytic mechanism. Cysteine 135 is modified (S-cysteinyl cysteine; in inhibited form). A substrate-binding site is contributed by glutamine 162. Residues 165 to 169 (SGGGA), arginine 173, and proline 193 contribute to the NADP(+) site. Glutamate 241 contacts substrate. Position 244 (lysine 244) interacts with phosphate. Arginine 267 is a substrate binding site. The active-site Proton acceptor is histidine 274. Glutamine 350 provides a ligand contact to NADP(+).

The protein belongs to the aspartate-semialdehyde dehydrogenase family. As to quaternary structure, homodimer.

The catalysed reaction is L-aspartate 4-semialdehyde + phosphate + NADP(+) = 4-phospho-L-aspartate + NADPH + H(+). It functions in the pathway amino-acid biosynthesis; L-lysine biosynthesis via DAP pathway; (S)-tetrahydrodipicolinate from L-aspartate: step 2/4. The protein operates within amino-acid biosynthesis; L-methionine biosynthesis via de novo pathway; L-homoserine from L-aspartate: step 2/3. Its pathway is amino-acid biosynthesis; L-threonine biosynthesis; L-threonine from L-aspartate: step 2/5. Its activity is regulated as follows. Is inhibited by L- and D-cystine, and by other cystine derivatives, via the formation of a covalently bound cysteine at the active site Cys-135. Catalyzes the NADPH-dependent formation of L-aspartate-semialdehyde (L-ASA) by the reductive dephosphorylation of L-aspartyl-4-phosphate. This Escherichia coli (strain K12) protein is Aspartate-semialdehyde dehydrogenase.